The sequence spans 255 residues: Geranylgeranylglyceryl phosphate synthase (255 aa).

2 residues coordinate Mg(2+): D34 and T64. Residues 182-188 (YLEAGSG), 213-214 (GG), and 235-236 (GN) contribute to the sn-glycerol 1-phosphate site.

This sequence belongs to the GGGP/HepGP synthase family. Group II subfamily. It depends on Mg(2+) as a cofactor.

It localises to the cytoplasm. The catalysed reaction is sn-glycerol 1-phosphate + (2E,6E,10E)-geranylgeranyl diphosphate = sn-3-O-(geranylgeranyl)glycerol 1-phosphate + diphosphate. It functions in the pathway membrane lipid metabolism; glycerophospholipid metabolism. Its function is as follows. Prenyltransferase that catalyzes the transfer of the geranylgeranyl moiety of geranylgeranyl diphosphate (GGPP) to the C3 hydroxyl of sn-glycerol-1-phosphate (G1P). This reaction is the first ether-bond-formation step in the biosynthesis of archaeal membrane lipids. This Saccharolobus islandicus (strain M.14.25 / Kamchatka #1) (Sulfolobus islandicus) protein is Geranylgeranylglyceryl phosphate synthase.